Reading from the N-terminus, the 186-residue chain is ATP synthase subunit delta (186 aa).

This sequence belongs to the ATPase delta chain family. F-type ATPases have 2 components, F(1) - the catalytic core - and F(0) - the membrane proton channel. F(1) has five subunits: alpha(3), beta(3), gamma(1), delta(1), epsilon(1). CF(0) has four main subunits: a(1), b(1), b'(1) and c(10-14). The alpha and beta chains form an alternating ring which encloses part of the gamma chain. F(1) is attached to F(0) by a central stalk formed by the gamma and epsilon chains, while a peripheral stalk is formed by the delta, b and b' chains.

Its subcellular location is the cell inner membrane. In terms of biological role, f(1)F(0) ATP synthase produces ATP from ADP in the presence of a proton or sodium gradient. F-type ATPases consist of two structural domains, F(1) containing the extramembraneous catalytic core and F(0) containing the membrane proton channel, linked together by a central stalk and a peripheral stalk. During catalysis, ATP synthesis in the catalytic domain of F(1) is coupled via a rotary mechanism of the central stalk subunits to proton translocation. Its function is as follows. This protein is part of the stalk that links CF(0) to CF(1). It either transmits conformational changes from CF(0) to CF(1) or is implicated in proton conduction. The protein is ATP synthase subunit delta of Bradyrhizobium sp. (strain ORS 278).